We begin with the raw amino-acid sequence, 524 residues long: Bifunctional purine biosynthesis protein PurH (524 aa).

The MGS-like domain occupies 1 to 149 (MSDPVIKRAL…KNNESVTVVT (149 aa)).

This sequence belongs to the PurH family.

It carries out the reaction (6R)-10-formyltetrahydrofolate + 5-amino-1-(5-phospho-beta-D-ribosyl)imidazole-4-carboxamide = 5-formamido-1-(5-phospho-D-ribosyl)imidazole-4-carboxamide + (6S)-5,6,7,8-tetrahydrofolate. The enzyme catalyses IMP + H2O = 5-formamido-1-(5-phospho-D-ribosyl)imidazole-4-carboxamide. It participates in purine metabolism; IMP biosynthesis via de novo pathway; 5-formamido-1-(5-phospho-D-ribosyl)imidazole-4-carboxamide from 5-amino-1-(5-phospho-D-ribosyl)imidazole-4-carboxamide (10-formyl THF route): step 1/1. Its pathway is purine metabolism; IMP biosynthesis via de novo pathway; IMP from 5-formamido-1-(5-phospho-D-ribosyl)imidazole-4-carboxamide: step 1/1. The sequence is that of Bifunctional purine biosynthesis protein PurH from Chlorobium chlorochromatii (strain CaD3).